Consider the following 282-residue polypeptide: Bifunctional protein FolD (282 aa).

NADP(+) is bound by residues 165–167 (NRS), serine 190, and isoleucine 231.

Belongs to the tetrahydrofolate dehydrogenase/cyclohydrolase family. Homodimer.

It catalyses the reaction (6R)-5,10-methylene-5,6,7,8-tetrahydrofolate + NADP(+) = (6R)-5,10-methenyltetrahydrofolate + NADPH. The catalysed reaction is (6R)-5,10-methenyltetrahydrofolate + H2O = (6R)-10-formyltetrahydrofolate + H(+). Its pathway is one-carbon metabolism; tetrahydrofolate interconversion. Functionally, catalyzes the oxidation of 5,10-methylenetetrahydrofolate to 5,10-methenyltetrahydrofolate and then the hydrolysis of 5,10-methenyltetrahydrofolate to 10-formyltetrahydrofolate. This Clostridium botulinum (strain ATCC 19397 / Type A) protein is Bifunctional protein FolD.